Consider the following 37-residue polypeptide: SPTCTGADRPCAACCPCCPGTSCKGPEPNGVSYCRND.

4 disulfides stabilise this stretch: Cys4–Cys18, Cys11–Cys23, Cys14–Cys15, and Cys17–Cys34.

The protein belongs to the neurotoxin 11 (kappa toxin) family. As to expression, expressed by the venom gland.

It localises to the secreted. Its function is as follows. This excitatory toxin inhibits insect calcium-activated potassium (KCa) channels (Slo-type). The polypeptide is Lambda-hexatoxin-Hf1a (Hadronyche formidabilis (Northern tree funnel-web spider)).